We begin with the raw amino-acid sequence, 493 residues long: Occludin (493 aa).

Over 1–47 (MYSRPSNYAPSKDVYGGEMRSQPAYSYYPEEEIQHFYRWSSPPGIIK) the chain is Cytoplasmic. One can recognise an MARVEL domain in the interval 41 to 250 (SPPGIIKIMS…IIFFAVKTRK (210 aa)). A helical membrane pass occupies residues 48–70 (IMSILIVVMCVGIFACVASTLPW). Residues 71 to 116 (DLDITGQSMGYGMGSGSYSGGYTGYGFGGSQMGLGFAYGGNYTDPR) are Extracellular-facing. The chain crosses the membrane as a helical span at residues 117–141 (AAKGFILAMAAFCFIIGLVIFVMLV). Topologically, residues 142-151 (TRTPLSTSRK) are cytoplasmic. Residues 152 to 176 (FYLIVIIVSAIIGGLVFIATIVYTV) traverse the membrane as a helical segment. Over 177–224 (GVNPVAQASGSAFYTQIVSICNQFYSPVQTGVFVNQYLYHYCVVEPQE) the chain is Extracellular. A disulfide bridge links cysteine 197 with cysteine 218. The chain crosses the membrane as a helical span at residues 225–246 (AIAIVLGFLIVVAFAIIIFFAV). At 247 to 493 (KTRKKINQYG…IKQMVSNYDK (247 aa)) the chain is on the cytoplasmic side. Residues 334-407 (YGMSPRHYSS…TKQRQEYKQE (74 aa)) form a disordered region. The span at 352–361 (APPKKRPGKP) shows a compositional bias: basic residues. Threonine 375 carries the phosphothreonine; by CK2; in vitro modification. Position 379 is a phosphoserine; by CK2; in vitro (serine 379). Acidic residues predominate over residues 379 to 389 (SADELEDDSWD). The OCEL domain occupies 386–493 (DSWDSEYPPI…IKQMVSNYDK (108 aa)). A coiled-coil region spans residues 396-428 (TQTKQRQEYKQEFASDLHEYKRLQAELDELSKI).

Belongs to the ELL/occludin family. In terms of assembly, interacts in vitro with cingulin, possibly directly. Interacts with ZO-1. In terms of processing, phosphorylated. In terms of tissue distribution, localized at tight junctions of both epithelial and endothelial cells.

It is found in the cell membrane. The protein localises to the cell junction. The protein resides in the tight junction. Its function is as follows. Probably plays a role in the formation and regulation of the tight junction (TJ) paracellular permeability barrier. This chain is Occludin (ocln), found in Xenopus laevis (African clawed frog).